The chain runs to 420 residues: F420-non-reducing hydrogenase vhu subunit A (420 aa).

Cys-61 and Cys-64 together coordinate Ni(2+).

This sequence belongs to the [NiFe]/[NiFeSe] hydrogenase large subunit family. The F420-non-reducing hydrogenase vhu is composed of four subunits; VhuA, VhuD, VhuG and VhuU. Requires Ni(2+) as cofactor.

The protein is F420-non-reducing hydrogenase vhu subunit A (vhuA) of Methanococcus voltae.